Consider the following 196-residue polypeptide: Probable splicing factor, arginine/serine-rich 4 (196 aa).

Residues 19–97 (TSLKIDNLSY…RELRVTLAKY (79 aa)) form the RRM domain. Residues 91 to 106 (RVTLAKYDRPSDERGG) show a composition bias toward basic and acidic residues. A disordered region spans residues 91 to 196 (RVTLAKYDRP…SPSRSRSNSR (106 aa)). Over residues 112 to 141 (GRRRSRSPRRRSRSPRYSRSRSPRRSRSRT) the composition is skewed to basic residues. Composition is skewed to basic and acidic residues over residues 145–160 (PSRD…DNSR) and 167–176 (PPREDGSPKE). Over residues 184–196 (ASRSPSRSRSNSR) the composition is skewed to low complexity.

Belongs to the splicing factor SR family. In terms of processing, extensively phosphorylated on serine residues in the RS domain.

It is found in the nucleus. In terms of biological role, may play a functionally redundant role in embryogenesis. The chain is Probable splicing factor, arginine/serine-rich 4 (rsp-4) from Caenorhabditis elegans.